A 1369-amino-acid polypeptide reads, in one-letter code: Neurofascin (1369 aa).

The first 25 residues, 1–25 (MVLHSHQLTYAGIAFALCLHHLISA), serve as a signal peptide directing secretion. Over 26 to 1235 (IEVPLDSNIQ…NHVDIATQGW (1210 aa)) the chain is Extracellular. 2 consecutive Ig-like C2-type domains span residues 42–138 (PTIT…LQVS) and 144–231 (PKEK…NPYT). Intrachain disulfides connect C64–C119 and C163–C214. N241, N247, and N323 each carry an N-linked (GlcNAc...) asparagine glycan. 4 consecutive Ig-like C2-type domains span residues 262-350 (PSFM…ISVR), 355-442 (PYWL…AFVS), 448-535 (PRIL…VRLE), and 539-626 (PTRI…AYLT). Cystine bridges form between C286-C334 and C376-C426. N-linked (GlcNAc...) asparagine glycans are attached at residues N427, N464, and N501. Cystine bridges form between C470–C519 and C561–C610. 4 Fibronectin type-III domains span residues 645 to 740 (RPRD…TSGA), 745 to 838 (NPTG…SGED), 843 to 945 (APTD…TPEG), and 949 to 1057 (SPRY…TPAS). An N-linked (GlcNAc...) asparagine glycan is attached at N692. The span at 730–739 (MPSERYQTSG) shows a compositional bias: polar residues. Positions 730 to 753 (MPSERYQTSGARPEINPTGVQGAG) are disordered. N767, N793, N853, N994, and N1009 each carry an N-linked (GlcNAc...) asparagine glycan. The interval 1078–1097 (TTATPTTETPPTEIPTTAIP) is disordered. 4 N-linked (GlcNAc...) asparagine glycosylation sites follow: N1133, N1150, N1156, and N1171. The Fibronectin type-III 5 domain occupies 1133–1222 (NGSSIWDIRA…SYITFTTSSA (90 aa)). The helical transmembrane segment at 1236–1256 (FIGLMCAIALLVLILLIVCFI) threads the bilayer. Topologically, residues 1257–1369 (KRSRGGKYPV…SPVNAIYSLA (113 aa)) are cytoplasmic. 2 stretches are compositionally biased toward basic and acidic residues: residues 1266 to 1282 (VRDN…KNVE) and 1289 to 1298 (RSLESDEDNK). Residues 1266 to 1369 (VRDNKDEHLN…SPVNAIYSLA (104 aa)) are disordered. Polar residues predominate over residues 1300–1313 (LPNSQTSLDGTIKQ).

Belongs to the immunoglobulin superfamily. L1/neurofascin/NgCAM family. N-glycosylated and O-glycosylated. Post-translationally, may be proteolytically cleaved at Arg-636.

Its subcellular location is the cell membrane. Its function is as follows. Cell adhesion, ankyrin-binding protein which may be involved in neurite extension, axonal guidance, synaptogenesis, myelination and neuron-glial cell interactions. The protein is Neurofascin (NFASC) of Gallus gallus (Chicken).